The following is a 258-amino-acid chain: Acyl-[acyl-carrier-protein]--UDP-N-acetylglucosamine O-acyltransferase (258 aa).

This sequence belongs to the transferase hexapeptide repeat family. LpxA subfamily. In terms of assembly, homotrimer.

It is found in the cytoplasm. The catalysed reaction is a (3R)-hydroxyacyl-[ACP] + UDP-N-acetyl-alpha-D-glucosamine = a UDP-3-O-[(3R)-3-hydroxyacyl]-N-acetyl-alpha-D-glucosamine + holo-[ACP]. It functions in the pathway glycolipid biosynthesis; lipid IV(A) biosynthesis; lipid IV(A) from (3R)-3-hydroxytetradecanoyl-[acyl-carrier-protein] and UDP-N-acetyl-alpha-D-glucosamine: step 1/6. In terms of biological role, involved in the biosynthesis of lipid A, a phosphorylated glycolipid that anchors the lipopolysaccharide to the outer membrane of the cell. This is Acyl-[acyl-carrier-protein]--UDP-N-acetylglucosamine O-acyltransferase from Alkalilimnicola ehrlichii (strain ATCC BAA-1101 / DSM 17681 / MLHE-1).